Here is a 170-residue protein sequence, read N- to C-terminus: Small ribosomal subunit protein uS5 (170 aa).

An S5 DRBM domain is found at 13–76; the sequence is LLEKLVGVRR…ENARKNMISV (64 aa).

Belongs to the universal ribosomal protein uS5 family. As to quaternary structure, part of the 30S ribosomal subunit. Contacts proteins S4 and S8.

Functionally, with S4 and S12 plays an important role in translational accuracy. Its function is as follows. Located at the back of the 30S subunit body where it stabilizes the conformation of the head with respect to the body. The chain is Small ribosomal subunit protein uS5 from Nitrosococcus oceani (strain ATCC 19707 / BCRC 17464 / JCM 30415 / NCIMB 11848 / C-107).